A 2005-amino-acid polypeptide reads, in one-letter code: Sodium channel protein type 2 subunit alpha (2005 aa).

At 1 to 129 (MAQSVLVPPG…KLAIKILVHS (129 aa)) the chain is on the cytoplasmic side. A Phosphoserine modification is found at Ser-4. Positions 28–61 (RIAEEKAKRPKQERKDEDDENGPKPNSDLEAGKS) are disordered. Lys-38 is covalently cross-linked (Glycyl lysine isopeptide (Lys-Gly) (interchain with G-Cter in SUMO1)). An I repeat occupies 111 to 456 (ILTPFNPIRK…QQMLEQLKKQ (346 aa)). The helical transmembrane segment at 130-148 (LFNMLIMCTILTNCVFMTM) threads the bilayer. Topologically, residues 149–155 (SNPPDWT) are extracellular. A helical membrane pass occupies residues 156-176 (KNVEYTFTGIYTFESLIKILA). Topologically, residues 177-190 (RGFCLEDFTFLRDP) are cytoplasmic. Residues 191–208 (WNWLDFTVITFAYVTEFV) form a helical membrane-spanning segment. At 209–214 (DLGNVS) the chain is on the extracellular side. Asn-212 carries N-linked (GlcNAc...) asparagine glycosylation. The helical transmembrane segment at 215–231 (ALRTFRVLRALKTISVI) threads the bilayer. Over 232-250 (PGLKTIVGALIQSVKKLSD) the chain is Cytoplasmic. The helical transmembrane segment at 251-270 (VMILTVFCLSVFALIGLQLF) threads the bilayer. At 271–369 (MGNLRNKCLQ…PNYGYTSFDT (99 aa)) the chain is on the extracellular side. Cysteines 278 and 338 form a disulfide. Asn-285, Asn-291, Asn-297, Asn-303, Asn-308, and Asn-340 each carry an N-linked (GlcNAc...) asparagine glycan. The pore-forming intramembrane region spans 370 to 394 (FSWAFLSLFRLMTQDFWENLYQLTL). The Extracellular segment spans residues 395–401 (RAAGKTY). A helical transmembrane segment spans residues 402–422 (MIFFVLVIFLGSFYLINLILA). At 423–759 (VVAMAYEEQN…HLVNLVVMDP (337 aa)) the chain is on the cytoplasmic side. A phosphoserine mark is found at Ser-468, Ser-471, Ser-484, Ser-526, Ser-528, Ser-531, Ser-553, Ser-554, Ser-558, Ser-573, Ser-576, Ser-589, Ser-610, Ser-623, Ser-686, Ser-687, and Ser-721. Residues 494-529 (SSKSEKELKNRRKKKKQKEQSGEEEKNDRVRKSESE) are disordered. Over residues 511-529 (KEQSGEEEKNDRVRKSESE) the composition is skewed to basic and acidic residues. Residues 590–610 (ENDFADDEHSTFEDNDSRRDS) are disordered. The segment covering 596 to 610 (DEHSTFEDNDSRRDS) has biased composition (basic and acidic residues). One copy of the II repeat lies at 741-1013 (CCKPWLKVKH…QIAVGRMQKG (273 aa)). The helical transmembrane segment at 760–778 (FVDLAITICIVLNTLFMAM) threads the bilayer. At 779–789 (EHYPMTEQFSS) the chain is on the extracellular side. A helical transmembrane segment spans residues 790 to 809 (VLSVGNLVFTGIFTAEMFLK). The Cytoplasmic portion of the chain corresponds to 810-823 (IIAMDPYYYFQEGW). The helical transmembrane segment at 824 to 843 (NIFDGFIVSLSLMELGLANV) threads the bilayer. The Extracellular portion of the chain corresponds to 844–845 (EG). Residues 846 to 863 (LSVLRSFRLLRVFKLAKS) traverse the membrane as a helical segment. The Cytoplasmic segment spans residues 864-879 (WPTLNMLIKIIGNSVG). Residues 880-898 (ALGNLTLVLAIIVFIFAVV) traverse the membrane as a helical segment. The Extracellular segment spans residues 899–927 (GMQLFGKSYKECVCKISNDCELPRWHMHD). Cys-912 and Cys-918 are oxidised to a cystine. The binds SCN2B stretch occupies residues 917–918 (DC). The pore-forming intramembrane region spans 928–948 (FFHSFLIVFRVLCGEWIETMW). Residues 949-961 (DCMEVAGQTMCLT) are Extracellular-facing. A disulfide bond links Cys-950 and Cys-959. A helical transmembrane segment spans residues 962–982 (VFMMVMVIGNLVVLNLFLALL). Residues 983 to 1209 (LSSFSSDNLA…TCYKIVEHNW (227 aa)) are Cytoplasmic-facing. The tract at residues 1120 to 1165 (EEFSSESDMEESKEKLNATSSSEGSTVDIGAPAEGEQPEVEPEESL) is disordered. Residues 1155-1165 (EQPEVEPEESL) are compositionally biased toward acidic residues. The III repeat unit spans residues 1190-1504 (KGKLWWNLRK…KKYYNAMKKL (315 aa)). The helical transmembrane segment at 1210–1227 (FETFIVFMILLSSGALAF) threads the bilayer. Over 1228–1240 (EDIYIEQRKTIKT) the chain is Extracellular. A helical transmembrane segment spans residues 1241–1259 (MLEYADKVFTYIFILEMLL). Residues 1260–1273 (KWVAYGFQVYFTNA) lie on the Cytoplasmic side of the membrane. A helical membrane pass occupies residues 1274–1292 (WCWLDFLIVDVSLVSLTAN). At 1293–1300 (ALGYSELG) the chain is on the extracellular side. The chain crosses the membrane as a helical span at residues 1301–1319 (AIKSLRTLRALRPLRALSR). Residues 1320-1336 (FEGMRVVVNALLGAIPS) are Cytoplasmic-facing. A helical transmembrane segment spans residues 1337-1356 (IMNVLLVCLIFWLIFSIMGV). Over 1357–1408 (NLFAGKFYHCINYTTGEMFDVSVVNNYSECKALIESNQTARWKNVKVNFDNV) the chain is Extracellular. The cysteines at positions 1366 and 1386 are disulfide-linked. 3 N-linked (GlcNAc...) asparagine glycosylation sites follow: Asn-1368, Asn-1382, and Asn-1393. An intramembrane region (pore-forming) is located at residues 1409 to 1430 (GLGYLSLLQVATFKGWMDIMYA). Residues 1431–1447 (AVDSRNVELQPKYEDNL) are Extracellular-facing. A helical transmembrane segment spans residues 1448–1469 (YMYLYFVIFIIFGSFFTLNLFI). Topologically, residues 1470–1532 (GVIIDNFNQQ…MVFDFVTKQV (63 aa)) are cytoplasmic. Ser-1506 bears the Phosphoserine; by PKC mark. An IV repeat occupies 1513 to 1811 (IPRPANKFQG…WEKFDPDATQ (299 aa)). A helical transmembrane segment spans residues 1533–1550 (FDISIMILICLNMVTMMV). Over 1551–1561 (ETDDQSQEMTN) the chain is Extracellular. A helical membrane pass occupies residues 1562–1580 (ILYWINLVFIVLFTGECVL). Residues 1581 to 1592 (KLISLRYYYFTI) are Cytoplasmic-facing. The helical transmembrane segment at 1593-1610 (GWNIFDFVVVILSIVGMF) threads the bilayer. Over 1611–1623 (LAELIEKYFVSPT) the chain is Extracellular. A helical transmembrane segment spans residues 1624-1640 (LFRVIRLARIGRILRLI). Residues 1641-1659 (KGAKGIRTLLFALMMSLPA) lie on the Cytoplasmic side of the membrane. Residues 1660–1677 (LFNIGLLLFLVMFIYAIF) traverse the membrane as a helical segment. The Extracellular segment spans residues 1678–1699 (GMSNFAYVKREVGIDDMFNFET). Positions 1700–1722 (FGNSMICLFQITTSAGWDGLLAP) form an intramembrane region, pore-forming. Topologically, residues 1723 to 1752 (ILNSGPPDCDPDKDHPGSSVKGDCGNPSVG) are extracellular. A disulfide bond links Cys-1731 and Cys-1746. The helical transmembrane segment at 1753-1775 (IFFFVSYIIISFLVVVNMYIAVI) threads the bilayer. Residues 1776–2005 (LENFSVATEE…KGKDIRESKK (230 aa)) lie on the Cytoplasmic side of the membrane. In terms of domain architecture, IQ spans 1905–1934 (EEVSAIIIQRAYRRYLLKQKVKKVSSIYKK). Ser-1930 carries the phosphoserine modification. The segment covering 1935-1964 (DKGKECDGTPIKEDTLIDKLNENSTPEKTD) has biased composition (basic and acidic residues). The tract at residues 1935–2005 (DKGKECDGTP…KGKDIRESKK (71 aa)) is disordered. Phosphothreonine occurs at positions 1943, 1963, and 1966. Ser-1971 is subject to Phosphoserine. Basic and acidic residues predominate over residues 1979-2005 (TKPEKEKFEKDKSEKEDKGKDIRESKK).

This sequence belongs to the sodium channel (TC 1.A.1.10) family. Nav1.2/SCN2A subfamily. In terms of assembly, heterooligomer of a large alpha subunit and a smaller beta subunit. Heterooligomer with SCN2B or SCN4B; disulfide-linked. Heterooligomer with SCN1B or SCN3B; non-covalently linked. Interacts with NEDD4L. Interacts with CALM. Interacts with TMEM233. Interacts with the conotoxin GVIIJ. Interacts with the spider beta/delta-theraphotoxin-Pre1a. Interacts with the conotoxin KIIIA. Interacts with the spider protoxin-II. Post-translationally, may be ubiquitinated by NEDD4L; which would promote its endocytosis. Phosphorylation at Ser-1506 by PKC in a highly conserved cytoplasmic loop slows inactivation of the sodium channel and reduces peak sodium currents. In terms of processing, sumoylated at Lys-38. Sumoylation is induced by hypoxia, increases voltage-gated sodium current and mediates the early response to acute hypoxia in neurons. Sumoylated SCN2A is located at the cell membrane.

Its subcellular location is the cell membrane. The enzyme catalyses Na(+)(in) = Na(+)(out). Mediates the voltage-dependent sodium ion permeability of excitable membranes. Assuming opened or closed conformations in response to the voltage difference across the membrane, the protein forms a sodium-selective channel through which Na(+) ions may pass in accordance with their electrochemical gradient. Implicated in the regulation of hippocampal replay occurring within sharp wave ripples (SPW-R) important for memory. The polypeptide is Sodium channel protein type 2 subunit alpha (Homo sapiens (Human)).